Here is a 92-residue protein sequence, read N- to C-terminus: Muscle LIM protein 1 (92 aa).

Positions 11–62 constitute an LIM zinc-binding domain; that stretch reads CPACGKSVYAAEERVAGGYKFHKTCFKCSMCNKALDSTNCTEHEKELFCKNC. The Nuclear localization signal motif lies at 65 to 70; that stretch reads RKYGPK.

As to expression, in the embryo, expression is restricted to the somatic, visceral, and pharyngeal muscles. Within the somatic musculature, MLP60 is distributed throughout the muscle fibers. There is no expression in cardiac mesoderm or in fat body.

It is found in the cytoplasm. It localises to the nucleus. Its function is as follows. Positive regulator of myogenesis. The polypeptide is Muscle LIM protein 1 (Mlp60A) (Drosophila melanogaster (Fruit fly)).